The primary structure comprises 303 residues: Methionyl-tRNA formyltransferase (303 aa).

Residue 108–111 participates in (6S)-5,6,7,8-tetrahydrofolate binding; it reads SDLP.

It belongs to the Fmt family.

The enzyme catalyses L-methionyl-tRNA(fMet) + (6R)-10-formyltetrahydrofolate = N-formyl-L-methionyl-tRNA(fMet) + (6S)-5,6,7,8-tetrahydrofolate + H(+). Functionally, attaches a formyl group to the free amino group of methionyl-tRNA(fMet). The formyl group appears to play a dual role in the initiator identity of N-formylmethionyl-tRNA by promoting its recognition by IF2 and preventing the misappropriation of this tRNA by the elongation apparatus. The protein is Methionyl-tRNA formyltransferase of Rickettsia felis (strain ATCC VR-1525 / URRWXCal2) (Rickettsia azadi).